A 578-amino-acid chain; its full sequence is Proline--tRNA ligase (578 aa).

This sequence belongs to the class-II aminoacyl-tRNA synthetase family. ProS type 1 subfamily. As to quaternary structure, homodimer.

It localises to the cytoplasm. The catalysed reaction is tRNA(Pro) + L-proline + ATP = L-prolyl-tRNA(Pro) + AMP + diphosphate. Its function is as follows. Catalyzes the attachment of proline to tRNA(Pro) in a two-step reaction: proline is first activated by ATP to form Pro-AMP and then transferred to the acceptor end of tRNA(Pro). As ProRS can inadvertently accommodate and process non-cognate amino acids such as alanine and cysteine, to avoid such errors it has two additional distinct editing activities against alanine. One activity is designated as 'pretransfer' editing and involves the tRNA(Pro)-independent hydrolysis of activated Ala-AMP. The other activity is designated 'posttransfer' editing and involves deacylation of mischarged Ala-tRNA(Pro). The misacylated Cys-tRNA(Pro) is not edited by ProRS. The chain is Proline--tRNA ligase from Syntrophus aciditrophicus (strain SB).